The following is a 549-amino-acid chain: Chaperonin GroEL (549 aa).

Residues 30–33, Lys-51, 87–91, Gly-415, 479–481, and Asp-495 each bind ATP; these read TLGP, DGTTT, and NAA.

It belongs to the chaperonin (HSP60) family. As to quaternary structure, forms a cylinder of 14 subunits composed of two heptameric rings stacked back-to-back. Interacts with the co-chaperonin GroES.

It is found in the cytoplasm. The catalysed reaction is ATP + H2O + a folded polypeptide = ADP + phosphate + an unfolded polypeptide.. Its function is as follows. Together with its co-chaperonin GroES, plays an essential role in assisting protein folding. The GroEL-GroES system forms a nano-cage that allows encapsulation of the non-native substrate proteins and provides a physical environment optimized to promote and accelerate protein folding. In Stenotrophomonas maltophilia (strain R551-3), this protein is Chaperonin GroEL.